The chain runs to 97 residues: Lipolysis-activating peptide 1-alpha chain (97 aa).

An N-terminal signal peptide occupies residues 1–21 (MNITLFCSVFILISLAGLSVS). One can recognise an LCN-type CS-alpha/beta domain in the interval 25-88 (PGNYPMSLYG…FWAAHKNHCK (64 aa)). 3 cysteine pairs are disulfide-bonded: Cys39–Cys62, Cys48–Cys67, and Cys52–Cys69.

Belongs to the long (3 C-C) scorpion toxin superfamily. As to quaternary structure, monomer (edited version) and heterodimer (non-edited version) of this alpha chain and a beta chain (AC D9U2A2). Expressed by the venom gland.

It is found in the secreted. Its function is as follows. The heterodimer non-edited LVP1 induces lipolysis in rat adipocytes. Induction of lipolysis by LVP1 appears to be mediated through the beta-2 adrenergic receptor pathway (ADRB2). Functionally, the edited BmKBTx-like, similar to beta-toxins, may modulate voltage-gated sodium channels (Nav) and may block voltage-gated potassium channels (Kv). This Lychas mucronatus (Chinese swimming scorpion) protein is Lipolysis-activating peptide 1-alpha chain.